Here is a 208-residue protein sequence, read N- to C-terminus: Golgi apparatus membrane protein TVP23 homolog B (208 aa).

M1 carries the post-translational modification N-acetylmethionine. Positions 1–21 are enriched in acidic residues; that stretch reads MLQQDSNDDTEDVSLFDAEEE. A disordered region spans residues 1-27; that stretch reads MLQQDSNDDTEDVSLFDAEEETTNRPK. 4 helical membrane-spanning segments follow: residues 34 to 53, 54 to 72, 126 to 146, and 152 to 172; these read PVASFFHLFFRVSAIIVYLL, CELFSSSFIACMVTIILLL, IFWLGLVACPVLWVVFAFSAL, and KWLAVVIMGVVLQGANLYGYI.

Belongs to the TVP23 family.

Its subcellular location is the membrane. This is Golgi apparatus membrane protein TVP23 homolog B (TVP23B) from Bos taurus (Bovine).